Here is a 90-residue protein sequence, read N- to C-terminus: Protein RALF-like 29 (90 aa).

The first 25 residues, Met-1–Ala-25, serve as a signal peptide directing secretion. 2 disulfides stabilise this stretch: Cys-41–Cys-50 and Cys-63–Cys-69.

Belongs to the plant rapid alkalinization factor (RALF) family.

The protein resides in the secreted. Cell signaling peptide that may regulate plant stress, growth, and development. Mediates a rapid alkalinization of extracellular space by mediating a transient increase in the cytoplasmic Ca(2+) concentration leading to a calcium-dependent signaling events through a cell surface receptor and a concomitant activation of some intracellular mitogen-activated protein kinases. In Arabidopsis thaliana (Mouse-ear cress), this protein is Protein RALF-like 29 (RALFL29).